Reading from the N-terminus, the 507-residue chain is Ribonuclease Y (507 aa).

The helical transmembrane segment at 1-21 threads the bilayer; it reads MLWYIVAGAGGLLIGYLIASY. Positions 197 to 282 constitute a KH domain; sequence TVSTVSLPSD…EMYEKAKQEV (86 aa). The 94-residue stretch at 323 to 416 folds into the HD domain; that stretch reads VLNHSIEVAL…VAAADALSAA (94 aa).

This sequence belongs to the RNase Y family.

The protein localises to the cell membrane. In terms of biological role, endoribonuclease that initiates mRNA decay. The polypeptide is Ribonuclease Y (Thermotoga petrophila (strain ATCC BAA-488 / DSM 13995 / JCM 10881 / RKU-1)).